The following is a 109-amino-acid chain: Iron-sulfur cluster assembly protein CyaY (109 aa).

This sequence belongs to the frataxin family.

Its function is as follows. Involved in iron-sulfur (Fe-S) cluster assembly. May act as a regulator of Fe-S biogenesis. The polypeptide is Iron-sulfur cluster assembly protein CyaY (Shewanella sp. (strain ANA-3)).